We begin with the raw amino-acid sequence, 179 residues long: CASP-like protein 5A2 (179 aa).

The Cytoplasmic segment spans residues M1–S54. Helical transmembrane passes span L55 to A75 and T76 to L96. Residues T97–D114 lie on the Cytoplasmic side of the membrane. A helical membrane pass occupies residues W115–I135. At D136–A154 the chain is on the extracellular side. Residues A155–L175 traverse the membrane as a helical segment. Topologically, residues A176–R179 are cytoplasmic.

The protein belongs to the Casparian strip membrane proteins (CASP) family. In terms of assembly, homodimer and heterodimers.

It localises to the cell membrane. The chain is CASP-like protein 5A2 from Physcomitrium patens (Spreading-leaved earth moss).